The sequence spans 47 residues: Accessory gland peptide Acp33A (47 aa).

A signal peptide spans methionine 1–glycine 21.

As to expression, main cells of accessory gland and seminal fluid.

The protein resides in the secreted. Functionally, responsible for physiological and behavioral changes in mated female flies. In Drosophila melanogaster (Fruit fly), this protein is Accessory gland peptide Acp33A (Acp33A).